The chain runs to 432 residues: Glutamyl-tRNA reductase (432 aa).

Residues 49–52 (TCNR), S109, 114–116 (EGQ), and Q120 contribute to the substrate site. The active-site Nucleophile is the C50. Position 189–194 (189–194 (GAGKMS)) interacts with NADP(+).

This sequence belongs to the glutamyl-tRNA reductase family. Homodimer.

It carries out the reaction (S)-4-amino-5-oxopentanoate + tRNA(Glu) + NADP(+) = L-glutamyl-tRNA(Glu) + NADPH + H(+). Its pathway is porphyrin-containing compound metabolism; protoporphyrin-IX biosynthesis; 5-aminolevulinate from L-glutamyl-tRNA(Glu): step 1/2. The protein operates within porphyrin-containing compound metabolism; chlorophyll biosynthesis. Functionally, catalyzes the NADPH-dependent reduction of glutamyl-tRNA(Glu) to glutamate 1-semialdehyde (GSA). This Cyanothece sp. (strain PCC 7425 / ATCC 29141) protein is Glutamyl-tRNA reductase.